Here is a 652-residue protein sequence, read N- to C-terminus: Gametogenetin (652 aa).

Disordered regions lie at residues 1-39 (MGNL…MTSQ), 52-237 (PGSA…DSES), 251-273 (PSLA…GGGG), 291-473 (QGPL…GHKE), and 488-576 (LAAD…GAAN). 2 stretches are compositionally biased toward basic and acidic residues: residues 18–30 (QPSD…RRTS) and 124–133 (RLLEASHRGQ). Positions 123–486 (RRLLEASHRG…APTAAPALPP (364 aa)) are interaction with GGNBP1. 2 stretches are compositionally biased toward pro residues: residues 138 to 149 (SLRPLKPPPPPR) and 163 to 178 (QFPP…PPLP). Over residues 201–212 (ESQAGPRNQGQT) the composition is skewed to polar residues. Composition is skewed to low complexity over residues 213-230 (AGRA…GEMA), 251-267 (PSLA…AKAS), and 299-312 (ARPL…AQEA). Phosphoserine is present on S389. The segment covering 407–422 (APALLAPPTFIFPAPT) has biased composition (low complexity). Composition is skewed to pro residues over residues 428–466 (RPGP…PPLT) and 495–513 (APSP…PVSA). Residues 491 to 652 (DQAPAPSPAP…HYDLQATHSN (162 aa)) are interactions with ZNF403/GGNBP2 and OAZ3. Positions 523-532 (TRTRRNKGSR) are enriched in basic residues. Residues 538–552 (TRKDGLHGDGPRERA) are compositionally biased toward basic and acidic residues.

As to quaternary structure, interacts with FANCL, GGNBP1 and ZNF403/GGNBP2.

May be involved in spermatogenesis. In Homo sapiens (Human), this protein is Gametogenetin (GGN).